Consider the following 181-residue polypeptide: uncharacterized protein (181 aa).

The protein to M.pneumoniae MPN_635 C-terminal region.

This is an uncharacterized protein from Mycoplasma pneumoniae (strain ATCC 29342 / M129 / Subtype 1) (Mycoplasmoides pneumoniae).